The chain runs to 393 residues: CCA-adding enzyme (393 aa).

Residues Gly27 and Arg30 each contribute to the ATP site. 2 residues coordinate CTP: Gly27 and Arg30. 2 residues coordinate Mg(2+): Asp40 and Asp42. The ATP site is built by Arg111, Asp154, Arg157, Arg160, and Arg163. The CTP site is built by Arg111, Asp154, Arg157, Arg160, and Arg163.

Belongs to the tRNA nucleotidyltransferase/poly(A) polymerase family. Bacterial CCA-adding enzyme type 3 subfamily. In terms of assembly, homodimer. Requires Mg(2+) as cofactor.

The catalysed reaction is a tRNA precursor + 2 CTP + ATP = a tRNA with a 3' CCA end + 3 diphosphate. The enzyme catalyses a tRNA with a 3' CCA end + 2 CTP + ATP = a tRNA with a 3' CCACCA end + 3 diphosphate. Catalyzes the addition and repair of the essential 3'-terminal CCA sequence in tRNAs without using a nucleic acid template. Adds these three nucleotides in the order of C, C, and A to the tRNA nucleotide-73, using CTP and ATP as substrates and producing inorganic pyrophosphate. tRNA 3'-terminal CCA addition is required both for tRNA processing and repair. Also involved in tRNA surveillance by mediating tandem CCA addition to generate a CCACCA at the 3' terminus of unstable tRNAs. While stable tRNAs receive only 3'-terminal CCA, unstable tRNAs are marked with CCACCA and rapidly degraded. This is CCA-adding enzyme from Listeria monocytogenes serovar 1/2a (strain ATCC BAA-679 / EGD-e).